The sequence spans 245 residues: Small ribosomal subunit protein uS2 (245 aa).

It belongs to the universal ribosomal protein uS2 family.

This Pseudomonas fluorescens (strain ATCC BAA-477 / NRRL B-23932 / Pf-5) protein is Small ribosomal subunit protein uS2.